The following is a 483-amino-acid chain: Glutamyl-tRNA(Gln) amidotransferase subunit A (483 aa).

Active-site charge relay system residues include Lys-77 and Ser-152. Ser-176 (acyl-ester intermediate) is an active-site residue.

It belongs to the amidase family. GatA subfamily. As to quaternary structure, heterotrimer of A, B and C subunits.

It carries out the reaction L-glutamyl-tRNA(Gln) + L-glutamine + ATP + H2O = L-glutaminyl-tRNA(Gln) + L-glutamate + ADP + phosphate + H(+). In terms of biological role, allows the formation of correctly charged Gln-tRNA(Gln) through the transamidation of misacylated Glu-tRNA(Gln) in organisms which lack glutaminyl-tRNA synthetase. The reaction takes place in the presence of glutamine and ATP through an activated gamma-phospho-Glu-tRNA(Gln). The polypeptide is Glutamyl-tRNA(Gln) amidotransferase subunit A (Listeria monocytogenes serovar 1/2a (strain ATCC BAA-679 / EGD-e)).